A 178-amino-acid chain; its full sequence is RNA-binding protein (178 aa).

The segment at 108–178 (SGFQKPKIGS…KGKGRRGGKR (71 aa)) is disordered. Positions 168–178 (SKGKGRRGGKR) are enriched in basic residues.

This sequence belongs to the phytoreovirus RNA-binding protein family.

It is found in the host cytoplasm. Constituent of viral factories. Binds to ssRNA and dsRNA. The chain is RNA-binding protein from Wound tumor virus (strain NJ) (WTV).